The chain runs to 74 residues: Conotoxin VxVIA (74 aa).

The signal sequence occupies residues 1 to 22 (MKLTCVLIIAVLFLTAYQLATA). Residues 23-47 (ASHAKGKQKHRALRPADKHFRFTKR) constitute a propeptide that is removed on maturation. 3 disulfide bridges follow: Cys48/Cys62, Cys55/Cys66, and Cys61/Cys73.

Expressed by the venom duct.

It localises to the secreted. When injected intracranially in mice, induces a series of symptoms such as quivering, climbing, scratching, barrel rolling and paralysis of limbs. Unexpectedly, no effect is observed on ionic currents when tested on locust DUM neuron. The protein is Conotoxin VxVIA of Conus vexillum (Flag cone).